Here is a 321-residue protein sequence, read N- to C-terminus: Tetraacyldisaccharide 4'-kinase (321 aa).

ATP is bound at residue 54–61 (SVGGTGKT).

Belongs to the LpxK family.

The enzyme catalyses a lipid A disaccharide + ATP = a lipid IVA + ADP + H(+). Its pathway is glycolipid biosynthesis; lipid IV(A) biosynthesis; lipid IV(A) from (3R)-3-hydroxytetradecanoyl-[acyl-carrier-protein] and UDP-N-acetyl-alpha-D-glucosamine: step 6/6. Its function is as follows. Transfers the gamma-phosphate of ATP to the 4'-position of a tetraacyldisaccharide 1-phosphate intermediate (termed DS-1-P) to form tetraacyldisaccharide 1,4'-bis-phosphate (lipid IVA). The protein is Tetraacyldisaccharide 4'-kinase of Rickettsia africae (strain ESF-5).